Consider the following 265-residue polypeptide: Adenosylcobinamide-GDP ribazoletransferase (265 aa).

4 consecutive transmembrane segments (helical) span residues 51 to 71, 72 to 92, 121 to 140, and 203 to 223; these read LVGV…QLIF, PDSV…GAFH, IGTY…FVLW, and VASL…LFAF.

Belongs to the CobS family. Mg(2+) serves as cofactor.

Its subcellular location is the cell inner membrane. It catalyses the reaction alpha-ribazole + adenosylcob(III)inamide-GDP = adenosylcob(III)alamin + GMP + H(+). It carries out the reaction alpha-ribazole 5'-phosphate + adenosylcob(III)inamide-GDP = adenosylcob(III)alamin 5'-phosphate + GMP + H(+). It functions in the pathway cofactor biosynthesis; adenosylcobalamin biosynthesis; adenosylcobalamin from cob(II)yrinate a,c-diamide: step 7/7. Joins adenosylcobinamide-GDP and alpha-ribazole to generate adenosylcobalamin (Ado-cobalamin). Also synthesizes adenosylcobalamin 5'-phosphate from adenosylcobinamide-GDP and alpha-ribazole 5'-phosphate. This is Adenosylcobinamide-GDP ribazoletransferase from Vibrio parahaemolyticus serotype O3:K6 (strain RIMD 2210633).